The primary structure comprises 321 residues: D-alanine--D-alanine ligase (321 aa).

Positions 103 to 303 constitute an ATP-grasp domain; sequence KKILTPENIP…YVALCRMIVE (201 aa). Residue 129–186 participates in ATP binding; it reads PLPRPYVLKPVNEGSSVGVAIIDESFNDGQPIRKDQIDPWKNFKTLLAEPFIKGRELT. Positions 254, 270, and 272 each coordinate Mg(2+).

Belongs to the D-alanine--D-alanine ligase family. The cofactor is Mg(2+). It depends on Mn(2+) as a cofactor.

It is found in the cytoplasm. The enzyme catalyses 2 D-alanine + ATP = D-alanyl-D-alanine + ADP + phosphate + H(+). The protein operates within cell wall biogenesis; peptidoglycan biosynthesis. Functionally, cell wall formation. This Zymomonas mobilis subsp. mobilis (strain ATCC 31821 / ZM4 / CP4) protein is D-alanine--D-alanine ligase.